The sequence spans 412 residues: DnaJ homolog subfamily A member 2 (412 aa).

A J domain is found at 8 to 70 (KLYDILGVPP…EKRELYDRYG (63 aa)). Lys39 is modified (N6-acetyllysine). Phosphoserine is present on residues Ser78 and Ser123. The segment at 130–214 (GKTTKLQLSK…CEGKKVIKEV (85 aa)) adopts a CR-type zinc-finger fold. Lys134 participates in a covalent cross-link: Glycyl lysine isopeptide (Lys-Gly) (interchain with G-Cter in SUMO2). The Zn(2+) site is built by Cys143 and Cys146. Residues 143–150 (CSACSGQG) form a CXXCXGXG motif repeat. Lys152 bears the N6-acetyllysine mark. Zn(2+) contacts are provided by Cys159, Cys162, Cys186, Cys189, Cys202, and Cys205. CXXCXGXG motif repeat units lie at residues 159–166 (CSACRGRG), 186–193 (CSDCNGEG), and 202–209 (CKKCEGKK). A disordered region spans residues 365–412 (IGETEEVELQEFDSTRGSGGGQRREAYNDSSDEESSSHHGPGVQCAHQ). Tyr391 is subject to Phosphotyrosine. A phosphoserine mark is found at Ser394 and Ser395. Cys409 bears the Cysteine methyl ester mark. The S-farnesyl cysteine moiety is linked to residue Cys409. The propeptide at 410–412 (AHQ) is removed in mature form.

It is found in the membrane. In terms of biological role, co-chaperone of Hsc70. Stimulates ATP hydrolysis and the folding of unfolded proteins mediated by HSPA1A/B (in vitro). This is DnaJ homolog subfamily A member 2 (Dnaja2) from Mus musculus (Mouse).